The sequence spans 89 residues: Small ribosomal subunit protein uS15 (89 aa).

Belongs to the universal ribosomal protein uS15 family. Part of the 30S ribosomal subunit. Forms a bridge to the 50S subunit in the 70S ribosome, contacting the 23S rRNA.

Functionally, one of the primary rRNA binding proteins, it binds directly to 16S rRNA where it helps nucleate assembly of the platform of the 30S subunit by binding and bridging several RNA helices of the 16S rRNA. In terms of biological role, forms an intersubunit bridge (bridge B4) with the 23S rRNA of the 50S subunit in the ribosome. This is Small ribosomal subunit protein uS15 from Blochmanniella pennsylvanica (strain BPEN).